An 86-amino-acid chain; its full sequence is Small ribosomal subunit protein bS20 (86 aa).

This sequence belongs to the bacterial ribosomal protein bS20 family.

Its function is as follows. Binds directly to 16S ribosomal RNA. The protein is Small ribosomal subunit protein bS20 of Paenarthrobacter aurescens (strain TC1).